Reading from the N-terminus, the 105-residue chain is Large ribosomal subunit protein uL24 (105 aa).

The protein belongs to the universal ribosomal protein uL24 family. Part of the 50S ribosomal subunit.

Its function is as follows. One of two assembly initiator proteins, it binds directly to the 5'-end of the 23S rRNA, where it nucleates assembly of the 50S subunit. In terms of biological role, one of the proteins that surrounds the polypeptide exit tunnel on the outside of the subunit. The chain is Large ribosomal subunit protein uL24 from Xanthomonas oryzae pv. oryzae (strain PXO99A).